We begin with the raw amino-acid sequence, 141 residues long: Zinc finger HIT domain-containing protein 3 (141 aa).

The HIT-type; degenerate zinc-finger motif lies at 1 to 28 (LEKPKYRCPACRVPYCSVACFRKHKEQC). Zn(2+)-binding residues include C8, C11, H24, and C28. S66 is modified (phosphoserine).

As to quaternary structure, thyroid receptor interacting proteins (TRIPs) specifically interact with the ligand binding domain of the thyroid receptor (TR). Requires the presence of thyroid hormone for its interaction. Interacts with NUFIP1. Interacts (via HIT-type zinc finger) with the RUVBL1/RUVBL2 complex in the presence of ADP.

Its subcellular location is the cytoplasm. The protein resides in the nucleus. The chain is Zinc finger HIT domain-containing protein 3 (ZNHIT3) from Pan troglodytes (Chimpanzee).